The chain runs to 629 residues: tRNA uridine 5-carboxymethylaminomethyl modification enzyme MnmG (629 aa).

FAD is bound by residues 14-19, V126, and S181; that span reads GAGHAG. Residue 273–287 participates in NAD(+) binding; that stretch reads GPRYCPSIEDKVVRF. Q370 contributes to the FAD binding site.

It belongs to the MnmG family. As to quaternary structure, homodimer. Heterotetramer of two MnmE and two MnmG subunits. Requires FAD as cofactor.

It is found in the cytoplasm. NAD-binding protein involved in the addition of a carboxymethylaminomethyl (cmnm) group at the wobble position (U34) of certain tRNAs, forming tRNA-cmnm(5)s(2)U34. The sequence is that of tRNA uridine 5-carboxymethylaminomethyl modification enzyme MnmG from Bacillus mycoides (strain KBAB4) (Bacillus weihenstephanensis).